An 82-amino-acid polypeptide reads, in one-letter code: Cytotoxin 6 (82 aa).

Residues 1 to 21 (MKTLLLTLVVVTIVCLDLGYT) form the signal peptide. 4 cysteine pairs are disulfide-bonded: cysteine 24/cysteine 42, cysteine 35/cysteine 59, cysteine 63/cysteine 74, and cysteine 75/cysteine 80.

This sequence belongs to the three-finger toxin family. Short-chain subfamily. Type IA cytotoxin sub-subfamily. Monomer in solution; Homodimer and oligomer in the presence of negatively charged lipids forming a pore with a size ranging between 20 and 30 Angstroms. In terms of tissue distribution, expressed by the venom gland.

It localises to the secreted. Its subcellular location is the target cell membrane. In terms of biological role, shows cytolytic activity on many different cells by forming pore in lipid membranes. In vivo, increases heart rate or kills the animal by cardiac arrest. In addition, it binds to heparin with high affinity, interacts with Kv channel-interacting protein 1 (KCNIP1) in a calcium-independent manner, and binds to integrin alpha-V/beta-3 (ITGAV/ITGB3) with moderate affinity. This is Cytotoxin 6 from Naja atra (Chinese cobra).